Here is a 145-residue protein sequence, read N- to C-terminus: MAIERTLSIIKPDGLEKGVIGKIISRFEEKGLKPVAIRLQHLSQAQAEGFYAVHKARPFFKDLVQFMISGPVVLMVLEGENAVLANRDIMGATNPAQAAEGTIRKDFATSIDKNTVHGSDSLENAKIEIAYFFRETEIHSYPYQK.

Positions 11, 59, 87, 93, 104, and 114 each coordinate ATP. His-117 (pros-phosphohistidine intermediate) is an active-site residue.

Belongs to the NDK family. As to quaternary structure, homotetramer. Mg(2+) is required as a cofactor.

The protein localises to the cytoplasm. The catalysed reaction is a 2'-deoxyribonucleoside 5'-diphosphate + ATP = a 2'-deoxyribonucleoside 5'-triphosphate + ADP. The enzyme catalyses a ribonucleoside 5'-diphosphate + ATP = a ribonucleoside 5'-triphosphate + ADP. Functionally, major role in the synthesis of nucleoside triphosphates other than ATP. The ATP gamma phosphate is transferred to the NDP beta phosphate via a ping-pong mechanism, using a phosphorylated active-site intermediate. The chain is Nucleoside diphosphate kinase from Myxococcus xanthus.